We begin with the raw amino-acid sequence, 360 residues long: Inward rectifier potassium channel 13 (360 aa).

The Cytoplasmic segment spans residues 1 to 50; it reads MDGSHCKVIAPLLTERHQRMVTKDGHSTLQMDGAQTGLAYLRDAWGILMD. Residues 51-77 traverse the membrane as a helical segment; the sequence is MRWRWMMLVFSASFVIHWLVFAVLWYI. The Extracellular segment spans residues 78–105; that stretch reads LAEMNGDLGLDHDAPPENHTICVKYITS. The helical; Pore-forming intramembrane region spans 106 to 122; that stretch reads FTAAFSFSLETQLTIGY. The Selectivity filter motif lies at 119–124; the sequence is TIGYGT. Topologically, residues 123 to 131 are extracellular; that stretch reads GTMFPSGDC. Residues 132-157 form a helical membrane-spanning segment; sequence PSAIALLAIQMLLGLMLEAFITGAFV. Residues 158-360 are Cytoplasmic-facing; the sequence is AKIARPKNRA…FQISETGLTE (203 aa). S287 carries the post-translational modification Phosphoserine.

The protein belongs to the inward rectifier-type potassium channel (TC 1.A.2.1) family. In terms of assembly, homotetramer. Interacts with RAB28; the interaction may facilitate cone outer segments phagocytosis. Phosphorylation at Ser-287 by PKA increases them.

The protein resides in the membrane. It localises to the cell membrane. It carries out the reaction K(+)(in) = K(+)(out). Its activity is regulated as follows. Inhibited by Ba(2+) and Cs(+), although sensitivity to those inhibitors is much lower than in other Kir channels. Its function is as follows. Inward rectifier potassium channels are characterized by a greater tendency to allow potassium to flow into the cell rather than out of it. Their voltage dependence is regulated by the concentration of extracellular potassium; as external potassium is raised, the voltage range of the channel opening shifts to more positive voltages. The inward rectification is mainly due to the blockage of outward current by internal magnesium. KCNJ13 has a very low single channel conductance, low sensitivity to block by external barium and cesium, and no dependence of its inward rectification properties on the internal blocking particle magnesium. This chain is Inward rectifier potassium channel 13 (KCNJ13), found in Bos taurus (Bovine).